We begin with the raw amino-acid sequence, 88 residues long: Small ribosomal subunit protein uS17 (88 aa).

The protein belongs to the universal ribosomal protein uS17 family. In terms of assembly, part of the 30S ribosomal subunit.

One of the primary rRNA binding proteins, it binds specifically to the 5'-end of 16S ribosomal RNA. This is Small ribosomal subunit protein uS17 from Lactobacillus gasseri (strain ATCC 33323 / DSM 20243 / BCRC 14619 / CIP 102991 / JCM 1131 / KCTC 3163 / NCIMB 11718 / NCTC 13722 / AM63).